We begin with the raw amino-acid sequence, 243 residues long: Thiocyanate hydrolase subunit gamma (243 aa).

4 residues coordinate Co(3+): Cys-128, Cys-131, Ser-132, and Cys-133. Cys-131 bears the Cysteine sulfinic acid (-SO2H) mark. Residue Cys-133 is modified to Cysteine sulfenic acid (-SOH).

Belongs to the nitrile hydratase subunit alpha family. In terms of assembly, heterododecamer consisting of 4 alpha, 4 beta, and 4 gamma subunits. The cofactor is Co(3+).

It carries out the reaction thiocyanate + H2O + 2 H(+) = carbonyl sulfide + NH4(+). Its pathway is organosulfur degradation; thiocyanate degradation. Its function is as follows. Involved in the degradation of thiocyanate. The polypeptide is Thiocyanate hydrolase subunit gamma (scnC) (Thiobacillus thioparus).